A 199-amino-acid polypeptide reads, in one-letter code: 7-methyl-GTP pyrophosphatase (199 aa).

Asp-76 serves as the catalytic Proton acceptor.

This sequence belongs to the Maf family. YceF subfamily. The cofactor is a divalent metal cation.

The protein localises to the cytoplasm. The catalysed reaction is N(7)-methyl-GTP + H2O = N(7)-methyl-GMP + diphosphate + H(+). Functionally, nucleoside triphosphate pyrophosphatase that hydrolyzes 7-methyl-GTP (m(7)GTP). May have a dual role in cell division arrest and in preventing the incorporation of modified nucleotides into cellular nucleic acids. This Mesorhizobium japonicum (strain LMG 29417 / CECT 9101 / MAFF 303099) (Mesorhizobium loti (strain MAFF 303099)) protein is 7-methyl-GTP pyrophosphatase.